The sequence spans 663 residues: UvrABC system protein B (663 aa).

The 388-residue stretch at 31-418 (DNIEGGEKAQ…TDTVVEQIIR (388 aa)) folds into the Helicase ATP-binding domain. Residue 44–51 (GATGTGKT) coordinates ATP. The short motif at 97–120 (YYDYYQPEAYVPSSDTYIEKDSSV) is the Beta-hairpin element. Residues 435–601 (QMDDLLGEIN…TIKKEIRDLI (167 aa)) enclose the Helicase C-terminal domain. Positions 627 to 662 (QAEIKALQQQMQEAAELLDFELAAQIRDVILELKAI) constitute a UVR domain.

This sequence belongs to the UvrB family. Forms a heterotetramer with UvrA during the search for lesions. Interacts with UvrC in an incision complex.

It is found in the cytoplasm. The UvrABC repair system catalyzes the recognition and processing of DNA lesions. A damage recognition complex composed of 2 UvrA and 2 UvrB subunits scans DNA for abnormalities. Upon binding of the UvrA(2)B(2) complex to a putative damaged site, the DNA wraps around one UvrB monomer. DNA wrap is dependent on ATP binding by UvrB and probably causes local melting of the DNA helix, facilitating insertion of UvrB beta-hairpin between the DNA strands. Then UvrB probes one DNA strand for the presence of a lesion. If a lesion is found the UvrA subunits dissociate and the UvrB-DNA preincision complex is formed. This complex is subsequently bound by UvrC and the second UvrB is released. If no lesion is found, the DNA wraps around the other UvrB subunit that will check the other stand for damage. The protein is UvrABC system protein B of Streptococcus agalactiae serotype III (strain NEM316).